Here is a 461-residue protein sequence, read N- to C-terminus: MRVLIKNGIVVNADGQAKQDLLIESGIVRQLGTDISPQLPCEEIDASGCYVFPGGVDVHTHFNIDVGIARSCDDFFTGTRAAACGGTTTIIDHMGFGPNGCRLRHQLEVYRGYAAHKAVIDYSFHGVIQHINHAILDEIPMMVEEGLSSFKLYLTYQYKLNDDEVLQALRRLHESGALTTVHPENDAAIASKRAEFIAAGLTAPRYHALSRPLECEAEAIARMINLAQIAGNAPLYIVHLSNGLGLDYLRLARANHQPVWVETCPQYLLLDERSYDTEDGMKFILSPPLRNVREQDKLWCGISDGAIDVVATDHCTFSMAQRQQISKGDFSRCPNGLPGVENRMQLLFSSGVMTGRISPERFVELTSAMPARLFGLWPQKGILAPGSDGDVVIIDPRQSQQIQHRHLHDNADYSPWEGFTCQGAIVRTLSRGETIFCDGTFTGKAGRGRFLRRKPFVPPVL.

The a divalent metal cation site is built by His59, His61, and Lys151. Lys151 carries the N6-carboxylysine modification. Tyr156 is a binding site for substrate. Positions 182 and 239 each coordinate a divalent metal cation. Ser286 serves as a coordination point for substrate. Asp313 is a binding site for a divalent metal cation. Substrate is bound at residue Asn335.

The protein belongs to the metallo-dependent hydrolases superfamily. Hydantoinase/dihydropyrimidinase family. As to quaternary structure, homotetramer. The cofactor is a divalent metal cation. Post-translationally, carboxylation allows a single lysine to coordinate two divalent metal cations.

It catalyses the reaction D-5-phenylhydantoin + H2O = N-carbamoyl-D-phenylglycine + H(+). Catalyzes the stereospecific hydrolysis of the cyclic amide bond of D-hydantoin derivatives with an aromatic side chains at the 5'-position. Has no activity on dihydropyrimidines. The physiological function is unknown. In Escherichia coli O81 (strain ED1a), this protein is D-phenylhydantoinase.